Consider the following 377-residue polypeptide: Gap junction gamma-1 protein (377 aa).

Residues 1–18 (MSWSFLTRLLEEINNHST) are Cytoplasmic-facing. The chain crosses the membrane as a helical span at residues 19-39 (FVGKVWLTVLIIFRIVLTAVG). Over 40 to 75 (GESIYYDEQSKFTCNTQQPGCENVCYDAFAPLSHVR) the chain is Extracellular. A helical transmembrane segment spans residues 76–96 (FWVFQIILITTPSIMYLGFAM). The Cytoplasmic segment spans residues 97 to 174 (HRIARQPEMQ…RRIKQDGLMK (78 aa)). Residues 129–163 (DYEEAEDNQEEDPMICEEEEPEKDSEKGDKKKHDG) form a disordered region. Residues 131 to 151 (EEAEDNQEEDPMICEEEEPEK) are compositionally biased toward acidic residues. A helical membrane pass occupies residues 175-197 (VYVLQLLFRSVFEVGFLMGQYIL). Topologically, residues 198-228 (YGFEVIPFFVCSRKPCPHTVDCFVSRPTEKT) are extracellular. The chain crosses the membrane as a helical span at residues 229–249 (IFLLIMYAVSALCLFLNLCEL). At 250–377 (FHLGIGGIRD…GVGNREKSGL (128 aa)) the chain is on the cytoplasmic side. 2 disordered regions span residues 265-294 (KKELQESRKKTPSAPPNYHSVLKKGRLPNG) and 334-377 (LNPT…KSGL). The segment covering 337-362 (TGDNTHASRSSSPESNSIAAEQNRLN) has biased composition (polar residues).

The protein belongs to the connexin family. Gamma-type subfamily. In terms of assembly, a connexon is composed of a hexamer of connexins.

It localises to the cell membrane. The protein localises to the cell junction. Its subcellular location is the gap junction. One gap junction consists of a cluster of closely packed pairs of transmembrane channels, the connexons, through which materials of low MW diffuse from one cell to a neighboring cell. This Xenopus tropicalis (Western clawed frog) protein is Gap junction gamma-1 protein (gjc1).